Consider the following 305-residue polypeptide: Tyrosine recombinase XerC (305 aa).

A Core-binding (CB) domain is found at 1–93; it reads MVLDGFAAHF…SWRQYCVWLV (93 aa). Residues 114-294 enclose the Tyr recombinase domain; sequence RVPKALPQEW…DFDHIARLYD (181 aa). Catalysis depends on residues R155, K179, H246, R249, and H272. The active-site O-(3'-phospho-DNA)-tyrosine intermediate is the Y281.

This sequence belongs to the 'phage' integrase family. XerC subfamily. In terms of assembly, forms a cyclic heterotetrameric complex composed of two molecules of XerC and two molecules of XerD.

It localises to the cytoplasm. In terms of biological role, site-specific tyrosine recombinase, which acts by catalyzing the cutting and rejoining of the recombining DNA molecules. The XerC-XerD complex is essential to convert dimers of the bacterial chromosome into monomers to permit their segregation at cell division. It also contributes to the segregational stability of plasmids. The polypeptide is Tyrosine recombinase XerC (Neisseria meningitidis serogroup C (strain 053442)).